Here is a 1032-residue protein sequence, read N- to C-terminus: Suppression of tumorigenicity 18 protein (1032 aa).

3 disordered regions span residues 29 to 76, 162 to 213, and 325 to 354; these read RAEE…TNDH, GRDK…LTYN, and RQPK…AKCP. Positions 40 to 51 are enriched in basic residues; that stretch reads NKRKSLLMKPRH. A compositionally biased stretch (basic and acidic residues) spans 52 to 76; the sequence is YSPDMDCKENPDNRNEDDGLETNDH. CCHHC-type zinc fingers lie at residues 344 to 387, 388 to 431, 700 to 743, 744 to 787, 792 to 835, and 845 to 888; these read PRPE…PLEI, LAMH…KLAM, RDLK…LKSL, MAAN…GIKM, EEKE…QKEN, and KLNK…IKKV. Zn(2+) is bound by residues Cys353, Cys358, His371, Cys377, Cys397, Cys402, His415, Cys421, Cys709, Cys714, His727, Cys733, Cys753, Cys758, His771, Cys777, Cys801, Cys806, His819, Cys825, Cys854, Cys859, His872, and Cys878. Residues 905–974 adopt a coiled-coil conformation; that stretch reads IEGDEEIRHL…KELAGLSQAL (70 aa).

This sequence belongs to the MYT1 family. As to expression, detected in brain.

The protein localises to the nucleus. Its function is as follows. Repressor that binds to DNA sequences containing a bipartite element consisting of a direct repeat of the sequence 5'-AAAGTTT-3' separated by 2-9 nucleotides. Represses basal transcription activity from target promoters. This is Suppression of tumorigenicity 18 protein (St18) from Rattus norvegicus (Rat).